We begin with the raw amino-acid sequence, 268 residues long: Unknown seed protein 30.1 (268 aa).

The signal sequence occupies residues methionine 1 to threonine 22. The BURP domain occupies leucine 68 to asparagine 259.

This Vicia faba (Broad bean) protein is Unknown seed protein 30.1.